An 839-amino-acid chain; its full sequence is Taste receptor type 1 member 2 (839 aa).

The first 19 residues, 1 to 19 (MRPRATTICSLFFLLRVLA), serve as a signal peptide directing secretion. Topologically, residues 20–566 (EPAKNSDFYL…AFLEWHEAPT (547 aa)) are extracellular. 9 N-linked (GlcNAc...) asparagine glycosylation sites follow: Asn84, Asn127, Asn248, Asn292, Asn312, Asn368, Asn428, Asn487, and Asn527. The chain crosses the membrane as a helical span at residues 567 to 587 (IVVALLAALGFLSTLAILVIF). The Cytoplasmic segment spans residues 588–602 (WRHFQTPMVRSAGGP). Residues 603-623 (MCFLMLTLLLVAYMVVPVYVG) form a helical membrane-spanning segment. Residues 624–635 (PPKVSTCFCRQA) lie on the Extracellular side of the membrane. A helical transmembrane segment spans residues 636 to 656 (LFPLCFTICISCIAVRSFQIV). The Cytoplasmic portion of the chain corresponds to 657–681 (CVFKMASRFPRAYSYWVRYQGPYVS). The chain crosses the membrane as a helical span at residues 682-702 (MAFITVLKMVTVVIGMLATGL). At 703–727 (NPTTRIDPDDPKIMIVSCNPNYRNS) the chain is on the extracellular side. A helical membrane pass occupies residues 728 to 748 (LFFNTGLDLLLSVVGFSFAYM). Residues 749-760 (GKELPTNYNEAK) lie on the Cytoplasmic side of the membrane. The helical transmembrane segment at 761–781 (FITLSMTFYFTSSVSLCTFMS) threads the bilayer. The Extracellular segment spans residues 782–784 (AYN). Residues 785–805 (GVLVTIMDLLVTVLNLLAISL) traverse the membrane as a helical segment. Residues 806–839 (GYFGPKCYMILFYPERNTPAYFNSMIQGYTMRRD) are Cytoplasmic-facing.

The protein belongs to the G-protein coupled receptor 3 family. TAS1R subfamily. As to quaternary structure, forms heterodimers with TAS1R3.

It is found in the cell membrane. In terms of biological role, putative taste receptor. TAS1R2/TAS1R3 recognizes diverse natural and synthetic sweeteners. This Papio hamadryas (Hamadryas baboon) protein is Taste receptor type 1 member 2 (TAS1R2).